A 684-amino-acid polypeptide reads, in one-letter code: Protein real-time (684 aa).

In terms of domain architecture, PRELI/MSF1 spans 2–178 (VQKYESPVRI…FVNELKQEGI (177 aa)). One can recognise a CRAL-TRIO domain in the interval 297-474 (TPAVVEKYFP…FLGGSCNVID (178 aa)). Residues 537–684 (HHGLYKAVDL…GFSSNSLQSR (148 aa)) enclose the GOLD domain.

It is found in the mitochondrion. In Anopheles gambiae (African malaria mosquito), this protein is Protein real-time.